A 204-amino-acid polypeptide reads, in one-letter code: 8-oxoguanine DNA glycosylase/AP lyase (204 aa).

Residues lysine 128 and aspartate 146 contribute to the active site.

It belongs to the type-2 OGG1 family.

It carries out the reaction 2'-deoxyribonucleotide-(2'-deoxyribose 5'-phosphate)-2'-deoxyribonucleotide-DNA = a 3'-end 2'-deoxyribonucleotide-(2,3-dehydro-2,3-deoxyribose 5'-phosphate)-DNA + a 5'-end 5'-phospho-2'-deoxyribonucleoside-DNA + H(+). Its function is as follows. Catalyzes the excision of an oxidatively damaged form of guanine (7,8-dihydro-8-oxoguanine = 8-oxoG) from DNA. Also cleaves the DNA backbone at apurinic/apyrimidinic sites (AP sites). The protein is 8-oxoguanine DNA glycosylase/AP lyase of Sulfurisphaera tokodaii (strain DSM 16993 / JCM 10545 / NBRC 100140 / 7) (Sulfolobus tokodaii).